We begin with the raw amino-acid sequence, 156 residues long: Small ribosomal subunit protein uS7 (156 aa).

The protein belongs to the universal ribosomal protein uS7 family. As to quaternary structure, part of the 30S ribosomal subunit. Contacts proteins S9 and S11.

Its function is as follows. One of the primary rRNA binding proteins, it binds directly to 16S rRNA where it nucleates assembly of the head domain of the 30S subunit. Is located at the subunit interface close to the decoding center, probably blocks exit of the E-site tRNA. The sequence is that of Small ribosomal subunit protein uS7 from Syntrophotalea carbinolica (strain DSM 2380 / NBRC 103641 / GraBd1) (Pelobacter carbinolicus).